The sequence spans 101 residues: Urease subunit beta (101 aa).

The protein belongs to the urease beta subunit family. In terms of assembly, heterotrimer of UreA (gamma), UreB (beta) and UreC (alpha) subunits. Three heterotrimers associate to form the active enzyme.

It is found in the cytoplasm. The enzyme catalyses urea + 2 H2O + H(+) = hydrogencarbonate + 2 NH4(+). The protein operates within nitrogen metabolism; urea degradation; CO(2) and NH(3) from urea (urease route): step 1/1. This is Urease subunit beta from Bradyrhizobium sp. (strain BTAi1 / ATCC BAA-1182).